Here is a 221-residue protein sequence, read N- to C-terminus: Glutathione peroxidase 6 (221 aa).

A signal peptide spans 1–19 (MFQQFQASCLVLFFLVGFA). Residue Sec73 is part of the active site. A non-standard amino acid (selenocysteine) is located at residue Sec73.

Belongs to the glutathione peroxidase family. As to expression, expressed in olfactory epithelium and embryos.

Its subcellular location is the secreted. The enzyme catalyses 2 glutathione + H2O2 = glutathione disulfide + 2 H2O. The sequence is that of Glutathione peroxidase 6 (GPX6) from Homo sapiens (Human).